A 155-amino-acid polypeptide reads, in one-letter code: SsrA-binding protein (155 aa).

The protein belongs to the SmpB family.

The protein localises to the cytoplasm. Functionally, required for rescue of stalled ribosomes mediated by trans-translation. Binds to transfer-messenger RNA (tmRNA), required for stable association of tmRNA with ribosomes. tmRNA and SmpB together mimic tRNA shape, replacing the anticodon stem-loop with SmpB. tmRNA is encoded by the ssrA gene; the 2 termini fold to resemble tRNA(Ala) and it encodes a 'tag peptide', a short internal open reading frame. During trans-translation Ala-aminoacylated tmRNA acts like a tRNA, entering the A-site of stalled ribosomes, displacing the stalled mRNA. The ribosome then switches to translate the ORF on the tmRNA; the nascent peptide is terminated with the 'tag peptide' encoded by the tmRNA and targeted for degradation. The ribosome is freed to recommence translation, which seems to be the essential function of trans-translation. This Streptococcus equi subsp. zooepidemicus (strain MGCS10565) protein is SsrA-binding protein.